The following is a 415-amino-acid chain: MFERSRFTIDQIDPEVFAAIQQENQRQEDHIELIASENYTSPAVMAAQGSQLTNKYAEGYPGKRYYGGCEYVDIVEQLAIDRVKQLFGAEAANVQPNSGSQANQGVYFAVLKPGDTIMGMSLAEGGHLTHGMALNMSGKWFNVVSYGLNAQEDIDYDALEKLAQEKKPKLIIAGASAFALRIDFERIGKVAKSIGAYFMVDMAHYAGLIAAGVYPNPVPHADFVTTTTHKSLRGPRGGVILMKAEHEKAINSSIFPGIQGGPLMHVIAGKAVAFKEALTPEFKAYQQQVVKNAAVLAETLIARGLRIVSGRTESHVMLVDLRAKNITGKEAERILGEAHLTVNKNAIPNDPEKPFVTSGIRVGSPAMTTRGFKEEEARIVGNLIADVLDNPHDAANIAAVREQVSALTKRFPVYG.

(6S)-5,6,7,8-tetrahydrofolate contacts are provided by residues Leu122 and Gly126–Leu128. An N6-(pyridoxal phosphate)lysine modification is found at Lys230.

Belongs to the SHMT family. As to quaternary structure, homodimer. Pyridoxal 5'-phosphate serves as cofactor.

The protein localises to the cytoplasm. It carries out the reaction (6R)-5,10-methylene-5,6,7,8-tetrahydrofolate + glycine + H2O = (6S)-5,6,7,8-tetrahydrofolate + L-serine. Its pathway is one-carbon metabolism; tetrahydrofolate interconversion. It participates in amino-acid biosynthesis; glycine biosynthesis; glycine from L-serine: step 1/1. Its function is as follows. Catalyzes the reversible interconversion of serine and glycine with tetrahydrofolate (THF) serving as the one-carbon carrier. This reaction serves as the major source of one-carbon groups required for the biosynthesis of purines, thymidylate, methionine, and other important biomolecules. Also exhibits THF-independent aldolase activity toward beta-hydroxyamino acids, producing glycine and aldehydes, via a retro-aldol mechanism. This is Serine hydroxymethyltransferase from Cupriavidus taiwanensis (strain DSM 17343 / BCRC 17206 / CCUG 44338 / CIP 107171 / LMG 19424 / R1) (Ralstonia taiwanensis (strain LMG 19424)).